Reading from the N-terminus, the 106-residue chain is Cytochrome c oxidase assembly protein COX16 homolog, mitochondrial (106 aa).

Residues 1-15 (MIAPAVLRALRKNKT) are Mitochondrial matrix-facing. The helical transmembrane segment at 16–33 (LRYGVPMLLLVVGGSFGL) threads the bilayer. The Mitochondrial intermembrane segment spans residues 34–106 (REFSQIRYDA…NPETLKPKTT (73 aa)). Positions 81–106 (IRGPRPWEDPQLLQGRNPETLKPKTT) are disordered.

The protein belongs to the COX16 family. Associates with the MITRAC complex. Interacts with MT-CO2/COX; specifically interacts with newly synthesized MT-CO2/COX. Interacts with SCO1, SCO2 and COA6.

It is found in the mitochondrion inner membrane. Its function is as follows. Required for the assembly of the mitochondrial respiratory chain complex IV (CIV), also known as cytochrome c oxidase. Promotes the insertion of copper into the active site of cytochrome c oxidase subunit II (MT-CO2/COX2). Interacts specifically with newly synthesized MT-CO2/COX and its copper center-forming metallochaperones SCO1, SCO2 and COA6. Probably facilitates MT-CO2/COX2 association with the MITRAC assembly intermediate containing MT-CO1/COX1, thereby participating in merging the MT-CO1/COX1 and MT-CO2/COX2 assembly lines. In Mus musculus (Mouse), this protein is Cytochrome c oxidase assembly protein COX16 homolog, mitochondrial.